We begin with the raw amino-acid sequence, 510 residues long: MKQILILDFGSQYTQLIARRLREEQIYCEILPFNTKYEDIIALDPAGVILSGGPSSVYGAGAPKPDPKIFSIDKPVLGICYGMQLLAVNGGGKVTACKKREYGFAEVKIKASTSKLLKGMPKKFTAWMSHGDGVHAMPKNFKVTATTSTSPFSAAEDDKNKRYAVQFHPEVVHTAHGSKILKNFARVICGYKEKWTPASIMTASIAAMKKQIGKGHVICGLSGGVDSSVVAALLAKAIGKNLYCIYVDTGLLRTGDRERTEGLAKKLKVNLKIVDAEKLFLTKLAGVTDPEKKRKIIGALFIEVFEKEAKKFKDAQFLAQGTLYPDVIESMSVKGPSDVIKSHHNVGGLPEKMNLKLVEPLRFLFKDEVRALGRELGLGSEIVDIHPFPGPGLAVRILGAVNKPDLDTLRAADFIVREELYKSGWDKKSWQAFAVLLPIKTVGVMGDERTYEKAACVRCVNSVDGMTADWTKLPYDVLQKISGRIISEVRGINKVVYDITSKPPSTIEWE.

The Glutamine amidotransferase type-1 domain maps to 3–194 (QILILDFGSQ…ARVICGYKEK (192 aa)). The active-site Nucleophile is the cysteine 80. Residues histidine 168 and glutamate 170 contribute to the active site. The GMPS ATP-PPase domain occupies 195–385 (WTPASIMTAS…LGLGSEIVDI (191 aa)). 222-228 (SGGVDSS) serves as a coordination point for ATP.

In terms of assembly, homodimer.

It carries out the reaction XMP + L-glutamine + ATP + H2O = GMP + L-glutamate + AMP + diphosphate + 2 H(+). The protein operates within purine metabolism; GMP biosynthesis; GMP from XMP (L-Gln route): step 1/1. Functionally, catalyzes the synthesis of GMP from XMP. The polypeptide is GMP synthase [glutamine-hydrolyzing] (Elusimicrobium minutum (strain Pei191)).